A 121-amino-acid polypeptide reads, in one-letter code: Cu-Zn superoxide dismutase-like protein (121 aa).

C48 and C98 form a disulfide bridge.

It belongs to the Cu-Zn superoxide dismutase family.

Its subcellular location is the host cytoplasm. In terms of biological role, virion protein with no enzymatic activity. The protein is Cu-Zn superoxide dismutase-like protein of Vaccinia virus (strain Ankara) (VACV).